Reading from the N-terminus, the 273-residue chain is Putative pyruvate, phosphate dikinase regulatory protein (273 aa).

153 to 160 (GVSRTSKS) contributes to the ADP binding site.

It belongs to the pyruvate, phosphate/water dikinase regulatory protein family. PDRP subfamily.

The catalysed reaction is N(tele)-phospho-L-histidyl/L-threonyl-[pyruvate, phosphate dikinase] + ADP = N(tele)-phospho-L-histidyl/O-phospho-L-threonyl-[pyruvate, phosphate dikinase] + AMP + H(+). The enzyme catalyses N(tele)-phospho-L-histidyl/O-phospho-L-threonyl-[pyruvate, phosphate dikinase] + phosphate + H(+) = N(tele)-phospho-L-histidyl/L-threonyl-[pyruvate, phosphate dikinase] + diphosphate. Functionally, bifunctional serine/threonine kinase and phosphorylase involved in the regulation of the pyruvate, phosphate dikinase (PPDK) by catalyzing its phosphorylation/dephosphorylation. The sequence is that of Putative pyruvate, phosphate dikinase regulatory protein from Ehrlichia canis (strain Jake).